The following is a 139-amino-acid chain: Large-conductance mechanosensitive channel (139 aa).

Transmembrane regions (helical) follow at residues 19-39 and 81-101; these read VAVIIGAAFGAIVSSMVADVI and GNFLTLTLNFLIVAFVLFMVV.

It belongs to the MscL family. As to quaternary structure, homopentamer.

It localises to the cell inner membrane. Channel that opens in response to stretch forces in the membrane lipid bilayer. May participate in the regulation of osmotic pressure changes within the cell. The sequence is that of Large-conductance mechanosensitive channel from Nitrobacter hamburgensis (strain DSM 10229 / NCIMB 13809 / X14).